Reading from the N-terminus, the 808-residue chain is Leucine--tRNA ligase (808 aa).

Residues 40 to 51 (PYPSGQGLHVGH) carry the 'HIGH' region motif. Positions 580–584 (KMSKS) match the 'KMSKS' region motif. Lys583 contacts ATP.

It belongs to the class-I aminoacyl-tRNA synthetase family.

It is found in the cytoplasm. It carries out the reaction tRNA(Leu) + L-leucine + ATP = L-leucyl-tRNA(Leu) + AMP + diphosphate. The sequence is that of Leucine--tRNA ligase from Leuconostoc mesenteroides subsp. mesenteroides (strain ATCC 8293 / DSM 20343 / BCRC 11652 / CCM 1803 / JCM 6124 / NCDO 523 / NBRC 100496 / NCIMB 8023 / NCTC 12954 / NRRL B-1118 / 37Y).